The primary structure comprises 452 residues: Probable ECA polymerase (452 aa).

A run of 11 helical transmembrane segments spans residues 6–26 (FSGL…LTWF), 37–57 (VFFS…TSVL), 63–83 (VGVA…CFYG), 118–138 (VILM…NGFL), 155–175 (GVAL…VYFL), 181–201 (AWLF…MIVG), 207–227 (IIIA…ISLW), 228–248 (MLVA…LKRY), 341–361 (LVVM…GLII), 378–398 (YKAA…IVLA), and 410–430 (VFFL…FWLF).

It belongs to the WzyE family. In terms of assembly, probably part of a complex composed of WzxE, WzyE and WzzE.

It is found in the cell inner membrane. It participates in bacterial outer membrane biogenesis; enterobacterial common antigen biosynthesis. In terms of biological role, probably involved in the polymerization of enterobacterial common antigen (ECA) trisaccharide repeat units. This chain is Probable ECA polymerase, found in Salmonella agona (strain SL483).